The sequence spans 150 residues: UPF0178 protein Bcep18194_A4809 (150 aa).

Belongs to the UPF0178 family.

This chain is UPF0178 protein Bcep18194_A4809, found in Burkholderia lata (strain ATCC 17760 / DSM 23089 / LMG 22485 / NCIMB 9086 / R18194 / 383).